Consider the following 322-residue polypeptide: Germ cell-specific gene 1-like protein (322 aa).

At 1 to 8 the chain is on the cytoplasmic side; that stretch reads MKTSRRGR. The chain crosses the membrane as a helical span at residues 9–29; the sequence is ALLAVALNLLALLFATTAFLT. Over 30 to 122 the chain is Extracellular; sequence TYWCQGTQRV…FIDLAPASEK (93 aa). Residues 123 to 143 traverse the membrane as a helical segment; that stretch reads GVLWLSVVSEVLYILLLVVGF. Topologically, residues 144–163 are cytoplasmic; it reads SLMCLELLHSSSVIDGLKLN. A helical transmembrane segment spans residues 164-184; the sequence is AFAAVFTVLSGLLGMVAHMMY. Residues 185-207 lie on the Extracellular side of the membrane; the sequence is TQVFQVTVSLGPEDWRPHSWDYG. The helical transmembrane segment at 208 to 228 threads the bilayer; it reads WSFCLAWGSFTCCMAASVTTL. Residues 229 to 322 are Cytoplasmic-facing; the sequence is NSYTKTVIEF…RQCWVLGHWV (94 aa). Phosphoserine is present on S274.

The protein belongs to the GSG1 family. As to quaternary structure, component of the inner core of AMPAR complexes. AMPAR complexes consist of an inner core made of 4 pore-forming GluA/GRIA proteins (GRIA1, GRIA2, GRIA3 and GRIA4) and 4 major auxiliary subunits arranged in a twofold symmetry. One of the two pairs of distinct binding sites is occupied either by CNIH2, CNIH3 or CACNG2, CACNG3. The other harbors CACNG2, CACNG3, CACNG4, CACNG8 or GSG1L. This inner core of AMPAR complexes is complemented by outer core constituents binding directly to the GluA/GRIA proteins at sites distinct from the interaction sites of the inner core constituents. Outer core constituents include at least PRRT1, PRRT2, CKAMP44/SHISA9, FRRS1L and NRN1. The proteins of the inner and outer core serve as a platform for other, more peripherally associated AMPAR constituents. Alone or in combination, these auxiliary subunits control the gating and pharmacology of the AMPAR complexes and profoundly impact their biogenesis and protein processing. As to expression, expressed in the brain (at protein level).

It is found in the cell membrane. The protein resides in the synapse. As a component of the inner core of AMPAR complexes, modifies AMPA receptor (AMPAR) gating. The sequence is that of Germ cell-specific gene 1-like protein (Gsg1l) from Rattus norvegicus (Rat).